Here is a 504-residue protein sequence, read N- to C-terminus: WD repeat-containing protein 55 homolog (504 aa).

Disordered regions lie at residues M1–D21 and Q33–D132. 2 stretches are compositionally biased toward acidic residues: residues N12–D21 and Q33–L48. Over residues S63–S74 the composition is skewed to low complexity. Residues N78–I89 are compositionally biased toward acidic residues. WD repeat units lie at residues K156–L195, V200–L239, A243–E281, E284–Q323, P326–D365, and Q410–D449. The tract at residues F477–T504 is disordered.

This sequence belongs to the WD repeat WDR55 family.

The sequence is that of WD repeat-containing protein 55 homolog from Drosophila virilis (Fruit fly).